The chain runs to 277 residues: 3-methyl-2-oxobutanoate hydroxymethyltransferase (277 aa).

Positions 43 and 82 each coordinate Mg(2+). Residues 43–44 (DS), aspartate 82, and lysine 112 each bind 3-methyl-2-oxobutanoate. Mg(2+) is bound at residue glutamate 114. The active-site Proton acceptor is the glutamate 181.

The protein belongs to the PanB family. As to quaternary structure, homodecamer; pentamer of dimers. Mg(2+) serves as cofactor.

The protein resides in the cytoplasm. It catalyses the reaction 3-methyl-2-oxobutanoate + (6R)-5,10-methylene-5,6,7,8-tetrahydrofolate + H2O = 2-dehydropantoate + (6S)-5,6,7,8-tetrahydrofolate. It participates in cofactor biosynthesis; (R)-pantothenate biosynthesis; (R)-pantoate from 3-methyl-2-oxobutanoate: step 1/2. Catalyzes the reversible reaction in which hydroxymethyl group from 5,10-methylenetetrahydrofolate is transferred onto alpha-ketoisovalerate to form ketopantoate. This is 3-methyl-2-oxobutanoate hydroxymethyltransferase from Listeria monocytogenes serotype 4a (strain HCC23).